The sequence spans 86 residues: Conotoxin Lt15a (86 aa).

The signal sequence occupies residues 1–23; it reads MEKLTILILVATVLLAIQVLVQS. Positions 24–49 are excised as a propeptide; it reads DGENPVKGRVKHYAAKRFSALFRGPR.

It belongs to the conotoxin O2 superfamily. Contains 4 disulfide bonds. In terms of tissue distribution, expressed by the venom duct.

It is found in the secreted. This chain is Conotoxin Lt15a, found in Conus litteratus (Lettered cone).